The chain runs to 523 residues: 2-isopropylmalate synthase (523 aa).

The 263-residue stretch at 5–267 folds into the Pyruvate carboxyltransferase domain; sequence VIIFDTTLRD…HTNINHHEIW (263 aa). The Mn(2+) site is built by D14, H202, H204, and N238. Residues 392-523 are regulatory domain; it reads RLDYFSVQSG…QNKENNKETV (132 aa).

Belongs to the alpha-IPM synthase/homocitrate synthase family. LeuA type 1 subfamily. In terms of assembly, homodimer. Mn(2+) serves as cofactor.

Its subcellular location is the cytoplasm. The catalysed reaction is 3-methyl-2-oxobutanoate + acetyl-CoA + H2O = (2S)-2-isopropylmalate + CoA + H(+). It functions in the pathway amino-acid biosynthesis; L-leucine biosynthesis; L-leucine from 3-methyl-2-oxobutanoate: step 1/4. Functionally, catalyzes the condensation of the acetyl group of acetyl-CoA with 3-methyl-2-oxobutanoate (2-ketoisovalerate) to form 3-carboxy-3-hydroxy-4-methylpentanoate (2-isopropylmalate). This Salmonella agona (strain SL483) protein is 2-isopropylmalate synthase.